Reading from the N-terminus, the 445-residue chain is 23S rRNA (uracil(1939)-C(5))-methyltransferase RlmD (445 aa).

The disordered stretch occupies residues 1-21; that stretch reads MARRRKQLPETPEPASIETLS. The 60-residue stretch at 5–64 folds into the TRAM domain; it reads RKQLPETPEPASIETLSHDGRGIARRDGKTTFIDNALPGEEVMFKFTYMRRKFDEGKAVE. The [4Fe-4S] cluster site is built by Cys77, Cys83, Cys86, and Cys165. 6 residues coordinate S-adenosyl-L-methionine: Gln275, Phe304, Asn309, Glu325, Asp352, and Asp373. Residue Cys399 is the Nucleophile of the active site.

The protein belongs to the class I-like SAM-binding methyltransferase superfamily. RNA M5U methyltransferase family. RlmD subfamily.

The enzyme catalyses uridine(1939) in 23S rRNA + S-adenosyl-L-methionine = 5-methyluridine(1939) in 23S rRNA + S-adenosyl-L-homocysteine + H(+). Catalyzes the formation of 5-methyl-uridine at position 1939 (m5U1939) in 23S rRNA. This Alcanivorax borkumensis (strain ATCC 700651 / DSM 11573 / NCIMB 13689 / SK2) protein is 23S rRNA (uracil(1939)-C(5))-methyltransferase RlmD.